A 270-amino-acid polypeptide reads, in one-letter code: Small ribosomal subunit protein uS3 (270 aa).

The 69-residue stretch at isoleucine 38–lysine 106 folds into the KH type-2 domain. The interval glutamate 212 to serine 270 is disordered. 2 stretches are compositionally biased toward low complexity: residues alanine 216 to proline 225 and glutamine 245 to alanine 263.

This sequence belongs to the universal ribosomal protein uS3 family. In terms of assembly, part of the 30S ribosomal subunit. Forms a tight complex with proteins S10 and S14.

Binds the lower part of the 30S subunit head. Binds mRNA in the 70S ribosome, positioning it for translation. The polypeptide is Small ribosomal subunit protein uS3 (Thermobifida fusca (strain YX)).